The sequence spans 1271 residues: Protein flightless-1 homolog (1271 aa).

At Met1 the chain carries N-acetylmethionine. The interval Met1–Lys427 is interaction with LRRFIP1 and LRRFIP2. LRR repeat units follow at residues Leu7–Met32, Thr33–Leu55, Gln56–Leu78, Ser80–Leu103, Asp104–Ala126, Lys127–Asn149, Leu150–Leu173, His175–Ala196, Met197–Leu222, Ser223–Leu245, Ser247–Trp268, Val269–Leu291, Lys293–Leu316, Thr317–Cys339, Pro340–Thr363, and Ile365–Arg385. N6-acetyllysine is present on Lys21. A Phosphoserine modification is found at Ser406. Ser436 bears the Phosphoserine; by SGK3 mark. Residues Val495 to Glu827 form an interaction with ACTL6A region. 3 Gelsolin-like repeats span residues Phe509–Leu591, Asn629–Trp703, and Leu759–Phe831. Residue Ser860 is modified to Phosphoserine. The segment at Lys951–Gln977 is disordered. Residues Thr952–Glu967 are compositionally biased toward basic and acidic residues. Over residues Glu968 to Gln977 the composition is skewed to acidic residues. One copy of the Gelsolin-like 4 repeat lies at Lys1183–Phe1256.

Interacts with actin, ACTL6A and NCOA2. Interacts with CARM1. Interacts with LRRFIP1, LRRFIP2 and MYD88. Upon LPS stimulation, LRRFIP2 competes for MYD88-binding; LRRFIP1 constitutively blocks the interaction with MyD88, even in the absence of LPS. Interacts with the nuclear receptors ESR1 and THRB. Interacts with SGK3. Interacts (via the gelsolin-like region) with TMOD1 and TMOD3. Interacts with LMOD2, VCL, GSN and DES. Expressed in blastocyst.

Its subcellular location is the nucleus. The protein localises to the cytoplasm. The protein resides in the cytoskeleton. It localises to the microtubule organizing center. It is found in the centrosome. Its subcellular location is the cell junction. The protein localises to the focal adhesion. The protein resides in the cell projection. It localises to the podosome. Its function is as follows. Is a regulator of actin polymerization, required for proper myofibril organization and regulation of the length of sarcomeric thin filaments. It also plays a role in the assembly of cardiomyocyte cell adhesion complexes. Regulates cytoskeletal rearrangements involved in cytokinesis and cell migration, by inhibiting Rac1-dependent paxillin phosphorylation. May play a role as coactivator in transcriptional activation by hormone-activated nuclear receptors (NR) and acts in cooperation with NCOA2 and CARM1. Involved in estrogen hormone signaling. The polypeptide is Protein flightless-1 homolog (Flii) (Mus musculus (Mouse)).